The primary structure comprises 187 residues: Large ribosomal subunit protein bL32m (187 aa).

Residues Cys-109, Cys-112, Cys-122, and Cys-125 each contribute to the Zn(2+) site.

This sequence belongs to the bacterial ribosomal protein bL32 family. As to quaternary structure, component of the mitochondrial ribosome large subunit (39S) which comprises a 16S rRNA and about 50 distinct proteins. In terms of processing, MRPL32 precursor is processed by the m-AAA protease (composed of AFG3L2 and SPG7), which cleaves the N-terminal transit peptide. Cleavage by the m-AAA protease takes place prior to assembly into the large subunit, an essential step for mitochondrial ribosome (mitoribosome) assembly. Proper processing by the m-AAA protease is dependent on the zinc-binding region within the tightly folded C-terminal domain of MRPL32: zinc-dependent folding halts degradation initiated from the N-terminus and triggers the release of mature MRPL32.

The protein localises to the mitochondrion. Component of the mitochondrial large ribosomal subunit (mt-LSU). The mitochondrial ribosome (mitoribosome) is a large ribonucleoprotein complex responsible for the synthesis of proteins inside mitochondria. This is Large ribosomal subunit protein bL32m (Mrpl32) from Mus musculus (Mouse).